The following is a 203-amino-acid chain: ATP synthase subunit b (203 aa).

A helical transmembrane segment spans residues 14-34 (FVWPLLGAGLLLAAEGVAWAS).

It belongs to the ATPase B chain family. In terms of assembly, F-type ATPases have 2 components, F(1) - the catalytic core - and F(0) - the membrane proton channel. F(1) has five subunits: alpha(3), beta(3), gamma(1), delta(1), epsilon(1). F(0) has three main subunits: a(1), b(2) and c(10-14). The alpha and beta chains form an alternating ring which encloses part of the gamma chain. F(1) is attached to F(0) by a central stalk formed by the gamma and epsilon chains, while a peripheral stalk is formed by the delta and b chains.

It localises to the cell inner membrane. In terms of biological role, f(1)F(0) ATP synthase produces ATP from ADP in the presence of a proton or sodium gradient. F-type ATPases consist of two structural domains, F(1) containing the extramembraneous catalytic core and F(0) containing the membrane proton channel, linked together by a central stalk and a peripheral stalk. During catalysis, ATP synthesis in the catalytic domain of F(1) is coupled via a rotary mechanism of the central stalk subunits to proton translocation. Functionally, component of the F(0) channel, it forms part of the peripheral stalk, linking F(1) to F(0). The protein is ATP synthase subunit b of Syntrophobacter fumaroxidans (strain DSM 10017 / MPOB).